We begin with the raw amino-acid sequence, 469 residues long: Rubisco accumulation factor 1, chloroplastic (469 aa).

The N-terminal 46 residues, 1 to 46 (MLSLSHPHPHPASTTAAAAARHHHRRNAPFAPHHRRRRRFAHLTTS), are a transit peptide targeting the chloroplast. Positions 1-78 (MLSLSHPHPH…TPPPTAPPDQ (78 aa)) are disordered. Basic residues predominate over residues 20–41 (ARHHHRRNAPFAPHHRRRRRFA). An N-terminal alpha-helix region spans residues 90 to 281 (LPDKYKDLDL…PARARVEAEL (192 aa)). The stretch at 246–294 (RQSREAIDAEDSVAELERALEVVDTEPARARVEAELDRARRKAAGEEVD) forms a coiled coil. A C-terminal beta sheet region spans residues 311 to 456 (VPVVRLMYGE…AEVLVVVRPP (146 aa)).

This sequence belongs to the RAF family.

The protein resides in the plastid. It is found in the chloroplast. In terms of biological role, required for assembly or stability of RuBisCO. Acts at a postchaperonin step to fold and/or assemble the large subunit (LS) into RuBisCO. The protein is Rubisco accumulation factor 1, chloroplastic (RAF1) of Oryza sativa subsp. japonica (Rice).